The primary structure comprises 426 residues: uncharacterized protein (426 aa).

Positions Glu-23 to Thr-42 are disordered. A compositionally biased stretch (polar residues) spans Arg-26 to Thr-42.

Belongs to the serpin family.

This is an uncharacterized protein from Thermococcus kodakarensis (strain ATCC BAA-918 / JCM 12380 / KOD1) (Pyrococcus kodakaraensis (strain KOD1)).